Consider the following 372-residue polypeptide: MQHESPIIRRKSTRIYVGDVPIGDGAPIAVQSMTNTRTTDVEATVAQIRALEKVGADIVRVSVPTMEAAEAFKLIKQQVSVPLVADIHFDYRIALKVAEYGVDCLRINPGNIGNEERIRSVVDCARDKNIPIRIGVNGGSLEKDLQMKYGEPTPEALVESAMRHVDHLDRLNFDQFKVSVKASDVFLAVDSYRLLAKKIDQPLHLGITEAGGARAGAVKSAVGLGMLLSEGIGDTLRISLAADPVEEIKVGFDILKSLRIRSRGINFIACPSCSRQEFDVIGTVNALEQRLEDIITPMDVSIIGCVVNGPGEAEVSHLGLAGSNKKSAFYEDGKRQKERFDNNDLVNQLEAKIRAKASMMDSENRIEIKVQD.

4 residues coordinate [4Fe-4S] cluster: Cys270, Cys273, Cys305, and Glu312.

It belongs to the IspG family. [4Fe-4S] cluster serves as cofactor.

The enzyme catalyses (2E)-4-hydroxy-3-methylbut-2-enyl diphosphate + oxidized [flavodoxin] + H2O + 2 H(+) = 2-C-methyl-D-erythritol 2,4-cyclic diphosphate + reduced [flavodoxin]. It functions in the pathway isoprenoid biosynthesis; isopentenyl diphosphate biosynthesis via DXP pathway; isopentenyl diphosphate from 1-deoxy-D-xylulose 5-phosphate: step 5/6. Its function is as follows. Converts 2C-methyl-D-erythritol 2,4-cyclodiphosphate (ME-2,4cPP) into 1-hydroxy-2-methyl-2-(E)-butenyl 4-diphosphate. In Vibrio parahaemolyticus serotype O3:K6 (strain RIMD 2210633), this protein is 4-hydroxy-3-methylbut-2-en-1-yl diphosphate synthase (flavodoxin).